The sequence spans 98 residues: Integration host factor subunit alpha (98 aa).

Residues 54-74 are disordered; that stretch reads LRDKASRPGRNPKTGENIPVS.

The protein belongs to the bacterial histone-like protein family. In terms of assembly, heterodimer of an alpha and a beta chain.

Functionally, this protein is one of the two subunits of integration host factor, a specific DNA-binding protein that functions in genetic recombination as well as in transcriptional and translational control. The polypeptide is Integration host factor subunit alpha (Actinobacillus succinogenes (strain ATCC 55618 / DSM 22257 / CCUG 43843 / 130Z)).